A 514-amino-acid chain; its full sequence is Ammonium transporter 1 member 2 (514 aa).

11 consecutive transmembrane segments (helical) span residues 56–76, 91–111, 140–160, 165–185, 212–232, 257–277, 291–313, 328–348, 351–371, 380–400, and 431–451; these read LLFSAYLVFAMQLGFAMLCAG, VLDAAAGAISYYLFGFAFAFG, FFLYQWAFAIAAAGITSGSIA, FVAYLIYSTFLTGFVYPTVSH, FAGSGVVHMVGGIAGLCGALV, VVLGTFLLWFGWYGFNPGSFL, GQWSAVGRTAVTTTLSGCTAALT, IDVCNGLLGGFAAITSGCAVV, WAAIVCGFVASWVLIGFNLLA, LEAAQLHGGCGAWGLIFTGLF, and IVQIIVIVGWVTVTMGPLFYG. Position 472 is a phosphothreonine (T472).

It belongs to the ammonia transporter channel (TC 1.A.11.2) family. In terms of tissue distribution, high expression in root.

It localises to the membrane. Functionally, ammonium transporter probably involved in ammonium uptake from the soil. The sequence is that of Ammonium transporter 1 member 2 (AMT1-2) from Arabidopsis thaliana (Mouse-ear cress).